The sequence spans 301 residues: Ubiquitin thioesterase OTU1 (301 aa).

Residues 5–83 (RCKAKNGTHL…IVEEEKNKPK (79 aa)) form a UBX-like region. Positions 102 to 227 (VERRVVPADN…GIHYDPLQKV (126 aa)) constitute an OTU domain. Residues 107 to 113 (VPADNSC) are cys-loop. The active site involves Asp110. The Nucleophile role is filled by Cys113. Residues 166–176 (IRRDDTWGGAI) are variable-loop. Residues 216 to 220 (YDGIH) form a his-loop region. Ile219 is a substrate binding site. The active site involves His220. Positions 244–249 (DVILAQ) are S2 site. Residues 271–295 (LRCMVCQTGLVGQKEAREHAKETGH) form a C2H2-type zinc finger. His295 is an active-site residue.

The protein localises to the cytoplasm. It catalyses the reaction Thiol-dependent hydrolysis of ester, thioester, amide, peptide and isopeptide bonds formed by the C-terminal Gly of ubiquitin (a 76-residue protein attached to proteins as an intracellular targeting signal).. In terms of biological role, hydrolase that can remove conjugated ubiquitin from proteins and participates in endoplasmic reticulum-associated degradation (ERAD) for misfolded lumenal proteins. May act by triming the ubiquitin chain on the associated substrate to facilitate their threading through the VCP/p97 pore. Ubiquitin moieties on substrates may present a steric impediment to the threading process when the substrate is transferred to the VCP pore and threaded through VCP's axial channel. Mediates deubiquitination of 'Lys-27'-, 'Lys-29'- and 'Lys-33'-linked polyubiquitin chains. Also able to hydrolyze 'Lys-11'-linked ubiquitin chains. Cleaves both polyubiquitin and di-ubiquitin. This is Ubiquitin thioesterase OTU1 (yod1) from Danio rerio (Zebrafish).